The following is a 126-amino-acid chain: Hydrogenase maturation factor HypA (126 aa).

H2 provides a ligand contact to Ni(2+). Zn(2+) contacts are provided by C78, C81, C97, and C100.

It belongs to the HypA/HybF family.

Involved in the maturation of [NiFe] hydrogenases. Required for nickel insertion into the metal center of the hydrogenase. The protein is Hydrogenase maturation factor HypA of Methanococcus maripaludis (strain C6 / ATCC BAA-1332).